We begin with the raw amino-acid sequence, 176 residues long: Nucleoside triphosphate/diphosphate phosphatase (176 aa).

The Proton donor role is filled by Arg-23. Mg(2+) is bound by residues Asn-87, Asp-103, Asp-105, Asp-107, Asp-120, and Glu-123.

The protein belongs to the Ntdp family. Mg(2+) is required as a cofactor.

It catalyses the reaction a ribonucleoside 5'-triphosphate + H2O = a ribonucleoside 5'-diphosphate + phosphate + H(+). The catalysed reaction is a ribonucleoside 5'-diphosphate + H2O = a ribonucleoside 5'-phosphate + phosphate + H(+). Its function is as follows. Has nucleoside phosphatase activity towards nucleoside triphosphates and nucleoside diphosphates. This chain is Nucleoside triphosphate/diphosphate phosphatase, found in Bacillus pumilus (strain SAFR-032).